A 462-amino-acid polypeptide reads, in one-letter code: Prenyltransferase phqI (462 aa).

Residue E101 coordinates brevianamide F. The dimethylallyl diphosphate site is built by R117, K204, Y206, K273, Y275, Y357, Y442, and Y446.

This sequence belongs to the tryptophan dimethylallyltransferase family.

Its pathway is alkaloid biosynthesis. In terms of biological role, prenyltransferase; part of the gene cluster that mediates the biosynthesis of paraherquamide, a fungal indole alkaloid that belongs to a family of natural products containing a characteristic bicyclo[2.2.2]diazaoctane core. The first steps in the biosynthesis of paraherquamide is the production of the beta-methyl-proline precursor from L-isoleucine. They require oxidation of a terminally hydroxylated L-isoleucine to the corresponding aldehyde by enzymes which have still to be identified. Spontaneous cyclization and dehydration would yield the 4-methyl pyrolline-5-carboxylic acid, which is then reduced by the pyrroline-5-carboxylate reductase phqD leading to the beta-methyl-proline precursor. The next step of paraherquamide biosynthesis involves coupling of beta-methyl-proline and L-tryptophan by the bimodular NRPS phqB, to produce a monooxopiperazine intermediate. The reductase (R) domain of phqB utilizes NADPH for hydride transfer to reduce the thioester bond of the T domain-tethered linear dipeptide to a hemithioaminal intermediate, which spontaneously cleaves the C-S bond to release the aldehyde product. This compound undergoes spontaneous cyclization and dehydration to give a dienamine which is reverse prenylated at C-2 by the reverse prenyltransferase phqJ. The other prenyltransferase present in the cluster, phqI may be a redundant gene in the pathway. During biosynthetic assembly, the key step to produce the polycyclic core is catalyzed by the bifunctional reductase and intramolecular [4+2] Diels-Alderase, phqE, resulting in formation of the [2.2.2] diazaoctane intermediate preparaherquamide. Following formation of preparaherquamide, an indole 2,3-epoxidation-initiated pinacol-like rearrangement is catalyzed by the phqK FAD-dependent monooxygenase. The prenyltransferase phqA, the cytochrome P450 monooxygenase phqL, and the FAD-linked oxidoreductase phqH (or the cytochrome P450 monooxygenase phqM), are proposed to be involved in the formation of the pyran ring. The FAD-dependent monooxygenase phqK is likely responsible for generation of the spiro-oxindole, and the N-methylation is likely mediated by the phqN methyltransferase leading to the isolable natural product paraherquamide F. However, the order of these biosynthetic steps has still to be determined. In late-stage paraherquamide biosynthesis, the third P450 monooxygenase, phqO, is probably responsible for the C-14 hydroxylation, transforming paraherquamide F to paraherquamide G, and paraherquamide E to the final product paraherquamide A. The expansion from the 6-membered ring pyran (in paraherquamides F and G) to the 7-membered dioxepin ring (in paraherquamides A and E) represents a poorly understood but intriguing process that probably involves the 2-oxoglutarate-dependent dioxygenase phqC. Finally, the remaining members of the paraherquamide cluster, including phqI as well as phqM (or phqH), do not have a clearly prescribed role and appear to be redundant. This is Prenyltransferase phqI from Penicillium fellutanum.